We begin with the raw amino-acid sequence, 476 residues long: Protein transport protein Sec61 subunit alpha (476 aa).

Over 2-33 the chain is Cytoplasmic; the sequence is GIKFLEVIKPFCAVLPEIQKPERKIQFREKVL. The chain crosses the membrane as a helical span at residues 34-53; the sequence is WTAITLFIFLVCCQIPLFGI. The Lumenal portion of the chain corresponds to 54–76; sequence MSSDSADPFYWMRVILASNRGTL. Residues 77–96 form a helical membrane-spanning segment; it reads MELGISPIVTSGLIMQLLAG. At 97–117 the chain is on the cytoplasmic side; it reads AKIIEVGDTPKDRALFNGAQK. A helical transmembrane segment spans residues 118–138; it reads LFGMIITIGQAIVYVMTGMYG. Topologically, residues 139–144 are lumenal; the sequence is DPSEMG. The chain crosses the membrane as a helical span at residues 145–165; that stretch reads AGICLVIIIQLFVAGLIVLLL. The Cytoplasmic portion of the chain corresponds to 166-172; the sequence is DELLQKG. The helical transmembrane segment at 173–193 threads the bilayer; sequence YGLGSGISLFIATNICETIVW. Residues 194-240 are Lumenal-facing; sequence KAFSPTTVNTGRGTEFEGAIIALFHLLATRTDKVRALREAFYRQNLP. Residues 241–261 form a helical membrane-spanning segment; the sequence is NLMNLIATVFVFAVVIYFQGF. The Cytoplasmic portion of the chain corresponds to 262-288; it reads RVDLPIKSARYRGQYNTYPIKLFYTSN. The helical transmembrane segment at 289–309 threads the bilayer; it reads IPIILQSALVSNLYVISQMLS. Topologically, residues 310–354 are lumenal; it reads TRFSGNFLVNLLGTWSDTSTGGPARAYPVGGLCYYFSPPESFGSV. The helical transmembrane segment at 355 to 375 threads the bilayer; the sequence is LDDPVHASIYIVFMLGSCAFF. Residues 376–420 lie on the Cytoplasmic side of the membrane; the sequence is SKTWIEVSGSSAKDVAKQLKEQQMVMRGHRETSMVHELNRYIPTA. The chain crosses the membrane as a helical span at residues 421–441; sequence AAFGGLCIGGLSVMADFLGAI. The Lumenal portion of the chain corresponds to 442–445; the sequence is GSGT. Residues 446 to 462 form a helical membrane-spanning segment; that stretch reads GILLAVTIIYQYFEIFV. Residues 463–476 lie on the Cytoplasmic side of the membrane; sequence KEQSEMGSMGALLF.

The protein belongs to the SecY/SEC61-alpha family. As to quaternary structure, the SEC61 channel-forming translocon complex consists of channel-forming core components SEC61A1, SEC61B and SEC61G and different auxiliary components such as SEC62 and SEC63. The SEC61 channel associates with the multi-pass translocon (MPT) complex.

The protein localises to the endoplasmic reticulum membrane. In terms of biological role, component of SEC61 channel-forming translocon complex that mediates transport of signal peptide-containing precursor polypeptides across the endoplasmic reticulum (ER). Forms a ribosome receptor and a gated pore in the ER membrane, both functions required for cotranslational translocation of nascent polypeptides. May cooperate with auxiliary protein SEC62, SEC63 and HSPA5/BiP to enable post-translational transport of small presecretory proteins. The SEC61 channel is also involved in ER membrane insertion of transmembrane proteins: it mediates membrane insertion of the first few transmembrane segments of proteins, while insertion of subsequent transmembrane regions of multi-pass membrane proteins is mediated by the multi-pass translocon (MPT) complex. The protein is Protein transport protein Sec61 subunit alpha (sec61a) of Gadus ogac (Greenland cod).